Reading from the N-terminus, the 375-residue chain is Probable UDP-N-acetylglucosamine 2-epimerase (375 aa).

The protein belongs to the UDP-N-acetylglucosamine 2-epimerase family.

It localises to the cytoplasm. The catalysed reaction is UDP-N-acetyl-alpha-D-glucosamine = UDP-N-acetyl-alpha-D-mannosamine. The protein operates within glycan metabolism; exopolysaccharide EPS I biosynthesis. Its function is as follows. May be involved in synthesis of N-acetyltrideoxygalactose, a component of exopolysaccharide EPS I which functions as a virulence factor. The chain is Probable UDP-N-acetylglucosamine 2-epimerase (epsC) from Ralstonia solanacearum (Pseudomonas solanacearum).